The chain runs to 142 residues: Ribosome-binding factor A (142 aa).

The disordered stretch occupies residues 120 to 142 (TLGEVQSESDQPTTYETTTVNKT). Polar residues predominate over residues 123–142 (EVQSESDQPTTYETTTVNKT).

The protein belongs to the RbfA family. As to quaternary structure, monomer. Binds 30S ribosomal subunits, but not 50S ribosomal subunits or 70S ribosomes.

It localises to the cytoplasm. Functionally, one of several proteins that assist in the late maturation steps of the functional core of the 30S ribosomal subunit. Associates with free 30S ribosomal subunits (but not with 30S subunits that are part of 70S ribosomes or polysomes). Required for efficient processing of 16S rRNA. May interact with the 5'-terminal helix region of 16S rRNA. This chain is Ribosome-binding factor A, found in Prochlorococcus marinus (strain MIT 9313).